A 550-amino-acid polypeptide reads, in one-letter code: Glucose-6-phosphate isomerase 1 (550 aa).

Catalysis depends on Glu-353, which acts as the Proton donor. Active-site residues include His-384 and Lys-512.

This sequence belongs to the GPI family.

It is found in the cytoplasm. The catalysed reaction is alpha-D-glucose 6-phosphate = beta-D-fructose 6-phosphate. It participates in carbohydrate biosynthesis; gluconeogenesis. The protein operates within carbohydrate degradation; glycolysis; D-glyceraldehyde 3-phosphate and glycerone phosphate from D-glucose: step 2/4. Its function is as follows. Catalyzes the reversible isomerization of glucose-6-phosphate to fructose-6-phosphate. The polypeptide is Glucose-6-phosphate isomerase 1 (Thiobacillus denitrificans (strain ATCC 25259 / T1)).